We begin with the raw amino-acid sequence, 444 residues long: Serine carboxypeptidase 2 (444 aa).

60-62 (NGG) contacts substrate. 3 disulfides stabilise this stretch: Cys65–Cys324, Cys222–Cys234, and Cys258–Cys291. N-linked (GlcNAc...) asparagine glycosylation is found at Asn116 and Asn127. 157 to 159 (ESY) contributes to the substrate binding site. Ser158 is an active-site residue. An N-linked (GlcNAc...) asparagine glycan is attached at Asn259. The propeptide at 260-286 (ITSSSSSSSSSLSQQRRSRGRYPWLTG) is linker peptide. 2 N-linked (GlcNAc...) asparagine glycosylation sites follow: Asn312 and Asn318. Catalysis depends on residues Asp361 and His413. 409-413 (RGAGH) contributes to the substrate binding site.

The protein belongs to the peptidase S10 family. In terms of assembly, carboxypeptidase II is a dimer, where each monomer is composed of two chains linked by a disulfide bond. In terms of processing, N-glycosylated.

The enzyme catalyses Preferential release of a C-terminal arginine or lysine residue.. The chain is Serine carboxypeptidase 2 (CBP2) from Triticum aestivum (Wheat).